Reading from the N-terminus, the 360-residue chain is Methylthioribose-1-phosphate isomerase (360 aa).

Asp-252 acts as the Proton donor in catalysis.

Belongs to the eIF-2B alpha/beta/delta subunits family. MtnA subfamily.

Its subcellular location is the cytoplasm. It is found in the nucleus. The catalysed reaction is 5-(methylsulfanyl)-alpha-D-ribose 1-phosphate = 5-(methylsulfanyl)-D-ribulose 1-phosphate. Its pathway is amino-acid biosynthesis; L-methionine biosynthesis via salvage pathway; L-methionine from S-methyl-5-thio-alpha-D-ribose 1-phosphate: step 1/6. Catalyzes the interconversion of methylthioribose-1-phosphate (MTR-1-P) into methylthioribulose-1-phosphate (MTRu-1-P). This Trichoplax adhaerens (Trichoplax reptans) protein is Methylthioribose-1-phosphate isomerase.